The chain runs to 89 residues: Small ribosomal subunit protein uS15 (89 aa).

It belongs to the universal ribosomal protein uS15 family. In terms of assembly, part of the 30S ribosomal subunit. Forms a bridge to the 50S subunit in the 70S ribosome, contacting the 23S rRNA.

In terms of biological role, one of the primary rRNA binding proteins, it binds directly to 16S rRNA where it helps nucleate assembly of the platform of the 30S subunit by binding and bridging several RNA helices of the 16S rRNA. Its function is as follows. Forms an intersubunit bridge (bridge B4) with the 23S rRNA of the 50S subunit in the ribosome. The polypeptide is Small ribosomal subunit protein uS15 (Chlamydia muridarum (strain MoPn / Nigg)).